Reading from the N-terminus, the 259-residue chain is Cytochrome c oxidase subunit 3 (259 aa).

The next 7 helical transmembrane spans lie at P13–F33, H36–W56, G80–F100, F125–A145, A160–M180, F195–I215, and A237–W257.

Belongs to the cytochrome c oxidase subunit 3 family. Component of the cytochrome c oxidase (complex IV, CIV), a multisubunit enzyme composed of a catalytic core of 3 subunits and several supernumerary subunits. The complex exists as a monomer or a dimer and forms supercomplexes (SCs) in the inner mitochondrial membrane with ubiquinol-cytochrome c oxidoreductase (cytochrome b-c1 complex, complex III, CIII).

The protein localises to the mitochondrion inner membrane. The enzyme catalyses 4 Fe(II)-[cytochrome c] + O2 + 8 H(+)(in) = 4 Fe(III)-[cytochrome c] + 2 H2O + 4 H(+)(out). In terms of biological role, component of the cytochrome c oxidase, the last enzyme in the mitochondrial electron transport chain which drives oxidative phosphorylation. The respiratory chain contains 3 multisubunit complexes succinate dehydrogenase (complex II, CII), ubiquinol-cytochrome c oxidoreductase (cytochrome b-c1 complex, complex III, CIII) and cytochrome c oxidase (complex IV, CIV), that cooperate to transfer electrons derived from NADH and succinate to molecular oxygen, creating an electrochemical gradient over the inner membrane that drives transmembrane transport and the ATP synthase. Cytochrome c oxidase is the component of the respiratory chain that catalyzes the reduction of oxygen to water. Electrons originating from reduced cytochrome c in the intermembrane space (IMS) are transferred via the dinuclear copper A center (CU(A)) of subunit 2 and heme A of subunit 1 to the active site in subunit 1, a binuclear center (BNC) formed by heme A3 and copper B (CU(B)). The BNC reduces molecular oxygen to 2 water molecules using 4 electrons from cytochrome c in the IMS and 4 protons from the mitochondrial matrix. This chain is Cytochrome c oxidase subunit 3 (COIII), found in Lumbricus terrestris (Common earthworm).